The sequence spans 357 residues: P2Y purinoceptor 8 (357 aa).

The Extracellular segment spans residues 1-26 (MVKNGSHLDAETLAMLQNKAISITLP). Residue Asn4 is glycosylated (N-linked (GlcNAc...) asparagine). A helical transmembrane segment spans residues 27–47 (VVYTMVAIISIPGNFFSLWVL). At 48 to 56 (CWHIKPKTP) the chain is on the cytoplasmic side. Residues 57 to 77 (SVIFMINLSITDLLLACCFPF) traverse the membrane as a helical segment. Residues 78–97 (QIFYHIQRNHWIFGKTLCSL) are Extracellular-facing. Cysteines 95 and 174 form a disulfide. A helical membrane pass occupies residues 98 to 118 (VTVMFYSNMYSSILTMTCISI). The Cytoplasmic segment spans residues 119–137 (ERYMGVVYPMKLIKWRRKR). A helical membrane pass occupies residues 138–158 (YALGACVIMWIFLLLAFYPLE). Over 159–185 (STDLTYEVKELGIITCFDVLKWEMLPN) the chain is Extracellular. A helical transmembrane segment spans residues 186–206 (FAAWVAFLLTLFVVLFLIPFI). Residues 207–236 (VTVGCYIGTIRKLIQTSSRYGNKQKTRSIY) lie on the Cytoplasmic side of the membrane. Residues 237-257 (LAIIVLSVFITCFAPNNFILL) traverse the membrane as a helical segment. At 258 to 271 (AHMIVRLFYEGSLY) the chain is on the extracellular side. A helical transmembrane segment spans residues 272 to 294 (PAYKLTLCLSCLNNCIDPFIYYF). The Cytoplasmic portion of the chain corresponds to 295–357 (ASKEFYQKFM…ICLQRQESVF (63 aa)).

It belongs to the G-protein coupled receptor 1 family.

The protein resides in the cell membrane. Its function is as follows. Probable receptor for purines coupled to G-proteins. The polypeptide is P2Y purinoceptor 8 (P2RY8) (Gallus gallus (Chicken)).